Consider the following 183-residue polypeptide: ATP synthase subunit delta (183 aa).

This sequence belongs to the ATPase delta chain family. In terms of assembly, F-type ATPases have 2 components, F(1) - the catalytic core - and F(0) - the membrane proton channel. F(1) has five subunits: alpha(3), beta(3), gamma(1), delta(1), epsilon(1). F(0) has three main subunits: a(1), b(2) and c(10-14). The alpha and beta chains form an alternating ring which encloses part of the gamma chain. F(1) is attached to F(0) by a central stalk formed by the gamma and epsilon chains, while a peripheral stalk is formed by the delta and b chains.

Its subcellular location is the cell inner membrane. Functionally, f(1)F(0) ATP synthase produces ATP from ADP in the presence of a proton or sodium gradient. F-type ATPases consist of two structural domains, F(1) containing the extramembraneous catalytic core and F(0) containing the membrane proton channel, linked together by a central stalk and a peripheral stalk. During catalysis, ATP synthesis in the catalytic domain of F(1) is coupled via a rotary mechanism of the central stalk subunits to proton translocation. Its function is as follows. This protein is part of the stalk that links CF(0) to CF(1). It either transmits conformational changes from CF(0) to CF(1) or is implicated in proton conduction. In Ehrlichia canis (strain Jake), this protein is ATP synthase subunit delta.